Consider the following 440-residue polypeptide: Chromosome partition protein MukF (440 aa).

Residues 208–236 (LSETSGTLRELQDTLEAAGDKLQANLLRI) form a leucine-zipper region.

Belongs to the MukF family. Interacts, and probably forms a ternary complex, with MukE and MukB via its C-terminal region. The complex formation is stimulated by calcium or magnesium. It is required for an interaction between MukE and MukB.

It is found in the cytoplasm. Its subcellular location is the nucleoid. In terms of biological role, involved in chromosome condensation, segregation and cell cycle progression. May participate in facilitating chromosome segregation by condensation DNA from both sides of a centrally located replisome during cell division. Not required for mini-F plasmid partitioning. Probably acts via its interaction with MukB and MukE. Overexpression results in anucleate cells. It has a calcium binding activity. This Edwardsiella ictaluri (strain 93-146) protein is Chromosome partition protein MukF.